The following is a 250-amino-acid chain: Cell division protein ZapD (250 aa).

Belongs to the ZapD family. Interacts with FtsZ.

Its subcellular location is the cytoplasm. Cell division factor that enhances FtsZ-ring assembly. Directly interacts with FtsZ and promotes bundling of FtsZ protofilaments, with a reduction in FtsZ GTPase activity. The polypeptide is Cell division protein ZapD (Serratia proteamaculans (strain 568)).